The chain runs to 180 residues: Large ribosomal subunit protein uL5 (180 aa).

The protein belongs to the universal ribosomal protein uL5 family. As to quaternary structure, part of the 50S ribosomal subunit; part of the 5S rRNA/L5/L18/L25 subcomplex. Contacts the 5S rRNA and the P site tRNA. Forms a bridge to the 30S subunit in the 70S ribosome.

Its function is as follows. This is one of the proteins that bind and probably mediate the attachment of the 5S RNA into the large ribosomal subunit, where it forms part of the central protuberance. In the 70S ribosome it contacts protein S13 of the 30S subunit (bridge B1b), connecting the 2 subunits; this bridge is implicated in subunit movement. Contacts the P site tRNA; the 5S rRNA and some of its associated proteins might help stabilize positioning of ribosome-bound tRNAs. This Lactobacillus delbrueckii subsp. bulgaricus (strain ATCC 11842 / DSM 20081 / BCRC 10696 / JCM 1002 / NBRC 13953 / NCIMB 11778 / NCTC 12712 / WDCM 00102 / Lb 14) protein is Large ribosomal subunit protein uL5.